The chain runs to 232 residues: Flagellar L-ring protein (232 aa).

The first 21 residues, 1–21 (MQKNAAHTYAISSLLVLSLTG), serve as a signal peptide directing secretion. A lipid anchor (N-palmitoyl cysteine) is attached at cysteine 22. Cysteine 22 carries S-diacylglycerol cysteine lipidation.

This sequence belongs to the FlgH family. As to quaternary structure, the basal body constitutes a major portion of the flagellar organelle and consists of four rings (L,P,S, and M) mounted on a central rod.

Its subcellular location is the cell outer membrane. It is found in the bacterial flagellum basal body. Assembles around the rod to form the L-ring and probably protects the motor/basal body from shearing forces during rotation. This is Flagellar L-ring protein from Escherichia coli O6:H1 (strain CFT073 / ATCC 700928 / UPEC).